We begin with the raw amino-acid sequence, 335 residues long: MAGRILLGLTLLATSLPLLAMGDAAVVPCISYSTVPGYFLQDDPAVDPKTFDYAKEGFGLIDQAYDTDETLDAELKKLPWRRFEHKVRSLNKHAASNVRFAVLFLGRHGQGFHNVAEAYYGTKAWDDYWSKLDGDGTITWSDAHLTEEGISQAKVARDTWAGQMKNSIPLPEVYYTSPLDRCLATAKFTFSKLELPPSKPFIPTVKELLRETLGVHTCDRRSSRNYIESTYPTYKIEPGFTQKDMLWDPEVRESDSDRDARLKKLLDDIFSHDKSTFMSLTAHGGAIRSILNVIGHREFGLQTGAVIPVLIRIETSTDAPEDPEEDLTIKIQGLN.

An N-terminal signal peptide occupies residues 1–24 (MAGRILLGLTLLATSLPLLAMGDA). Histidine 108 (tele-phosphohistidine intermediate) is an active-site residue. The active-site Proton donor/acceptor is the glutamate 211.

Belongs to the phosphoglycerate mutase family.

The protein localises to the secreted. In terms of biological role, probable phosphomutase that may have a function related to the manipulation of phosphate groups on carbohydrates. The sequence is that of Probable phosphoglycerate mutase ARB_03491 from Arthroderma benhamiae (strain ATCC MYA-4681 / CBS 112371) (Trichophyton mentagrophytes).